A 281-amino-acid chain; its full sequence is Probable endonuclease 4 (281 aa).

Residues His-69, His-109, Glu-145, Asp-179, His-182, His-216, Asp-229, His-231, and Glu-261 each coordinate Zn(2+).

Belongs to the AP endonuclease 2 family. Requires Zn(2+) as cofactor.

The enzyme catalyses Endonucleolytic cleavage to 5'-phosphooligonucleotide end-products.. Its function is as follows. Endonuclease IV plays a role in DNA repair. It cleaves phosphodiester bonds at apurinic or apyrimidinic (AP) sites, generating a 3'-hydroxyl group and a 5'-terminal sugar phosphate. This Pectobacterium carotovorum subsp. carotovorum (strain PC1) protein is Probable endonuclease 4.